Here is a 334-residue protein sequence, read N- to C-terminus: Iron-uptake system permease protein FeuB (334 aa).

Transmembrane regions (helical) follow at residues 9-29 (IILI…ILYG), 63-83 (AAGA…MQGI), 91-111 (PSIM…MVLL), 119-139 (MMIY…GLAA), 150-170 (LAII…AMSI), 191-211 (PDFL…AISL), 243-263 (VIIL…VGLV), 281-301 (PCSC…SRFI), and 305-325 (FETP…LYLI).

Belongs to the binding-protein-dependent transport system permease family. FecCD subfamily. In terms of assembly, the complex is composed of one ATP-binding protein (YusV), two transmembrane proteins (FeuB and FeuC) and a solute-binding protein (FeuA).

Its subcellular location is the cell membrane. The protein localises to the membrane raft. Functionally, involved in the uptake of iron. Probably responsible for the translocation of the substrate across the membrane. In terms of biological role, part of the ABC transporter complex FeuABC/YusV involved in import of the catecholate siderophores bacillibactin and enterobactin. The protein is Iron-uptake system permease protein FeuB (feuB) of Bacillus subtilis (strain 168).